We begin with the raw amino-acid sequence, 337 residues long: Anthranilate phosphoribosyltransferase (337 aa).

5-phospho-alpha-D-ribose 1-diphosphate contacts are provided by residues G82, 85–86 (GD), T90, 92–95 (NIST), 110–118 (KHGGRSVSS), and S122. Anthranilate is bound at residue G82. Residue S94 participates in Mg(2+) binding. R168 lines the anthranilate pocket. Residues D226 and E227 each contribute to the Mg(2+) site.

This sequence belongs to the anthranilate phosphoribosyltransferase family. In terms of assembly, homodimer. It depends on Mg(2+) as a cofactor.

It carries out the reaction N-(5-phospho-beta-D-ribosyl)anthranilate + diphosphate = 5-phospho-alpha-D-ribose 1-diphosphate + anthranilate. The protein operates within amino-acid biosynthesis; L-tryptophan biosynthesis; L-tryptophan from chorismate: step 2/5. In terms of biological role, catalyzes the transfer of the phosphoribosyl group of 5-phosphorylribose-1-pyrophosphate (PRPP) to anthranilate to yield N-(5'-phosphoribosyl)-anthranilate (PRA). The protein is Anthranilate phosphoribosyltransferase of Francisella tularensis subsp. novicida (strain U112).